A 180-amino-acid chain; its full sequence is tRNA (cytidine(56)-2'-O)-methyltransferase (180 aa).

S-adenosyl-L-methionine is bound by residues Leu-82, 112–116, and 130–137; these read GAEKV and VGNQPHSE.

Belongs to the aTrm56 family. In terms of assembly, homodimer.

It is found in the cytoplasm. It carries out the reaction cytidine(56) in tRNA + S-adenosyl-L-methionine = 2'-O-methylcytidine(56) in tRNA + S-adenosyl-L-homocysteine + H(+). Its function is as follows. Specifically catalyzes the AdoMet-dependent 2'-O-ribose methylation of cytidine at position 56 in tRNAs. This is tRNA (cytidine(56)-2'-O)-methyltransferase from Methanococcus vannielii (strain ATCC 35089 / DSM 1224 / JCM 13029 / OCM 148 / SB).